The following is a 237-amino-acid chain: Flagellar L-ring protein (237 aa).

Positions 1 to 16 (MIKRSAVVLMAVILTG) are cleaved as a signal peptide. A lipid anchor (N-palmitoyl cysteine) is attached at cysteine 17. Cysteine 17 carries S-diacylglycerol cysteine lipidation. The interval 122–143 (PPDSSGDMSTDSNSSSDGKGSV) is disordered. The segment covering 124–140 (DSSGDMSTDSNSSSDGK) has biased composition (low complexity).

This sequence belongs to the FlgH family. As to quaternary structure, the basal body constitutes a major portion of the flagellar organelle and consists of four rings (L,P,S, and M) mounted on a central rod.

It localises to the cell outer membrane. Its subcellular location is the bacterial flagellum basal body. Its function is as follows. Assembles around the rod to form the L-ring and probably protects the motor/basal body from shearing forces during rotation. The sequence is that of Flagellar L-ring protein from Allorhizobium ampelinum (strain ATCC BAA-846 / DSM 112012 / S4) (Agrobacterium vitis (strain S4)).